The primary structure comprises 187 residues: UPF0301 protein YqgE (187 aa).

The protein belongs to the UPF0301 (AlgH) family.

The sequence is that of UPF0301 protein YqgE from Salmonella choleraesuis (strain SC-B67).